The chain runs to 388 residues: Succinate--CoA ligase [ADP-forming] subunit beta (388 aa).

In terms of domain architecture, ATP-grasp spans 9-244; that stretch reads KQLFAEYGLP…PSQDDAREAH (236 aa). ATP contacts are provided by residues Lys-46, 53–55, Glu-99, Thr-102, and Glu-107; that span reads GRG. Asn-199 and Asp-213 together coordinate Mg(2+). Substrate contacts are provided by residues Asn-264 and 321–323; that span reads GIV.

Belongs to the succinate/malate CoA ligase beta subunit family. In terms of assembly, heterotetramer of two alpha and two beta subunits. Requires Mg(2+) as cofactor.

It catalyses the reaction succinate + ATP + CoA = succinyl-CoA + ADP + phosphate. The catalysed reaction is GTP + succinate + CoA = succinyl-CoA + GDP + phosphate. Its pathway is carbohydrate metabolism; tricarboxylic acid cycle; succinate from succinyl-CoA (ligase route): step 1/1. Functionally, succinyl-CoA synthetase functions in the citric acid cycle (TCA), coupling the hydrolysis of succinyl-CoA to the synthesis of either ATP or GTP and thus represents the only step of substrate-level phosphorylation in the TCA. The beta subunit provides nucleotide specificity of the enzyme and binds the substrate succinate, while the binding sites for coenzyme A and phosphate are found in the alpha subunit. This is Succinate--CoA ligase [ADP-forming] subunit beta from Pseudomonas entomophila (strain L48).